A 144-amino-acid polypeptide reads, in one-letter code: Large ribosomal subunit protein uL15 (144 aa).

The interval 1-54 (MHLNTLKPAEGAKKLAKRKGRGQGSGNGKMAGRGHKGQKSRSGGMPKIGFEGGQ) is disordered. Positions 22–31 (GQGSGNGKMA) are enriched in gly residues.

This sequence belongs to the universal ribosomal protein uL15 family. Part of the 50S ribosomal subunit.

Its function is as follows. Binds to the 23S rRNA. This Hydrogenovibrio crunogenus (strain DSM 25203 / XCL-2) (Thiomicrospira crunogena) protein is Large ribosomal subunit protein uL15.